We begin with the raw amino-acid sequence, 172 residues long: R-phycocyanin beta chain (172 aa).

Positions 35 and 39 each coordinate (2R,3E)-phycoerythrobilin. (2R,3E)-phycocyanobilin is bound by residues asparagine 72, cysteine 82, and 84-85 (RD). N4-methylasparagine is present on asparagine 72. Residues 149-151 (PAG) and cysteine 153 each bind (2R,3E)-phycoerythrobilin.

It belongs to the phycobiliprotein family. In terms of assembly, heterododecamer of 6 alpha and 6 beta chains. The basic functional unit of phycobiliproteins is a ring-shaped hexamer formed from two back-to-back trimers contacting via the alpha chain subunits. The trimers are composed of alpha/beta subunit heterodimers arranged around a three-fold axis of symmetry. The phycoerythrins also contain a gamma subunit which is located in the center of the hexamer. Contains one covalently linked phycocyanobilin chromophore and one covalently linked phycoerythrobilin chromophore.

The protein localises to the plastid. It localises to the chloroplast thylakoid membrane. Light-harvesting photosynthetic tetrapyrrole chromophore-protein from the phycobiliprotein complex (phycobilisome, PBS). Phycocyanin is the major phycobiliprotein in the PBS rod. The sequence is that of R-phycocyanin beta chain (rpcB) from Polysiphonia urceolata (Red alga).